The chain runs to 261 residues: DNA-directed RNA polymerase subunit Rpo3 (261 aa).

It belongs to the archaeal Rpo3/eukaryotic RPB3 RNA polymerase subunit family. As to quaternary structure, part of the RNA polymerase complex.

It is found in the cytoplasm. The catalysed reaction is RNA(n) + a ribonucleoside 5'-triphosphate = RNA(n+1) + diphosphate. In terms of biological role, DNA-dependent RNA polymerase (RNAP) catalyzes the transcription of DNA into RNA using the four ribonucleoside triphosphates as substrates. This is DNA-directed RNA polymerase subunit Rpo3 from Pyrococcus furiosus (strain ATCC 43587 / DSM 3638 / JCM 8422 / Vc1).